The primary structure comprises 440 residues: Glycerate 2-kinase (440 aa).

Lys-58 is a binding site for substrate.

It belongs to the glycerate kinase type-1 family. Homodimer. The cofactor is Mg(2+). Ni(2+) is required as a cofactor. Mn(2+) serves as cofactor. It depends on Co(2+) as a cofactor.

The catalysed reaction is (R)-glycerate + ATP = (2R)-2-phosphoglycerate + ADP + H(+). In terms of biological role, catalyzes the ATP-dependent phosphorylation of D-glycerate to 2-phosphoglycerate. It can also utilize GTP, CTP, UTP, ADP or pyrophosphate as phosphate donor. The chain is Glycerate 2-kinase (gck) from Pyrococcus horikoshii (strain ATCC 700860 / DSM 12428 / JCM 9974 / NBRC 100139 / OT-3).